A 433-amino-acid polypeptide reads, in one-letter code: L-lysine 2,3-aminomutase (433 aa).

Residues 122–334 (HRYPDRVLFY…SLIGHTTGFA (213 aa)) enclose the Radical SAM core domain. [4Fe-4S] cluster contacts are provided by Cys136, Cys140, and Cys143. Zn(2+) is bound at residue Cys279. At Lys348 the chain carries N6-(pyridoxal phosphate)lysine. Zn(2+) is bound by residues Cys389, Cys392, and Cys396.

This sequence belongs to the radical SAM superfamily. KamA family. [4Fe-4S] cluster is required as a cofactor. Requires pyridoxal 5'-phosphate as cofactor. The cofactor is Zn(2+).

The catalysed reaction is L-lysine = (3S)-3,6-diaminohexanoate. In terms of biological role, catalyzes the interconversion of L-alpha-lysine and L-beta-lysine. Is involved in the biosynthesis pathway of N6-acetyl-beta-lysine, a compatible solute produced by methanogenic archaea that helps cells to cope with salt stress. This is L-lysine 2,3-aminomutase (ablA) from Methanococcus maripaludis (strain DSM 14266 / JCM 13030 / NBRC 101832 / S2 / LL).